Here is a 1367-residue protein sequence, read N- to C-terminus: Mediator of RNA polymerase II transcription subunit 23 (1367 aa).

The segment at 1343 to 1367 is disordered; it reads PPQALSSGSPAPQANQVPTALPVTQ. The segment covering 1346–1367 has biased composition (polar residues); sequence ALSSGSPAPQANQVPTALPVTQ.

This sequence belongs to the Mediator complex subunit 23 family. Component of the Mediator complex, which is composed of MED1, MED4, MED6, MED7, MED8, MED9, MED10, MED11, MED12, MED13, MED13L, MED14, MED15, MED16, MED17, MED18, MED19, MED20, MED21, MED22, MED23, MED24, MED25, MED26, MED27, MED29, MED30, MED31, CCNC, CDK8 and CDC2L6/CDK11. The MED12, MED13, CCNC and CDK8 subunits form a distinct module termed the CDK8 module. Mediator containing the CDK8 module is less active than Mediator lacking this module in supporting transcriptional activation. Individual preparations of the Mediator complex lacking one or more distinct subunits have been variously termed ARC, CRSP, DRIP, PC2, SMCC and TRAP. Interacts with CDK8, CEBPB, CTNNB1, ELK1 and GLI3. Interacts with the adenovirus E1A protein.

The protein resides in the nucleus. Its function is as follows. Component of the Mediator complex, a coactivator involved in the regulated transcription of nearly all RNA polymerase II-dependent genes. Mediator functions as a bridge to convey information from gene-specific regulatory proteins to the basal RNA polymerase II transcription machinery. Mediator is recruited to promoters by direct interactions with regulatory proteins and serves as a scaffold for the assembly of a functional pre-initiation complex with RNA polymerase II and the general transcription factors. Also required for transcriptional activation subsequent to the assembly of the pre-initiation complex. Required for transcriptional activation by adenovirus E1A protein. Required for ELK1-dependent transcriptional activation in response to activated Ras signaling. This Rattus norvegicus (Rat) protein is Mediator of RNA polymerase II transcription subunit 23 (Med23).